A 502-amino-acid chain; its full sequence is Ubiquitin-associated protein 1 (502 aa).

The tract at residues 1–95 is interaction with ESCRT-I; sequence MASKKLGADF…AEAKVNSKSG (95 aa). A UMA domain is found at 17–63; that stretch reads LDDVPFKTGDKFKTPAKVGLPIGFSLPDCLQVVREVQYDFSLEKKTI. The span at 86 to 100 shows a compositional bias: basic and acidic residues; it reads AEAKVNSKSGPEGDS. The disordered stretch occupies residues 86–117; that stretch reads AEAKVNSKSGPEGDSKMSFSKTHSTATMPPPI. Residues 102–112 are compositionally biased toward polar residues; it reads MSFSKTHSTAT. Phosphoserine occurs at positions 146, 205, and 289. The segment at 260–290 is interaction with PTPN23; that stretch reads VSNIKSLSFPKLDSDDSNQKTAKLASTFHST. UBA domains lie at 389–430 and 451–498; these read SPSE…LFAH and QCSE…LMAR.

Component of an ESCRT-I complex (endosomal sorting complex required for transport I) which consists of TSG101, VPS28, VPS37A and UBAP1 in a 1:1:1:1 stoichiometry. Interacts with PTPN23. Interacts (via UBA domains) with ubiquitinated proteins. Ubiquitous. Highly expressed in heart, brain, placenta, lung, liver, skeletal muscle and pancreas.

The protein localises to the cytoplasm. It localises to the cytosol. Its subcellular location is the endosome. In terms of biological role, component of the ESCRT-I complex, a regulator of vesicular trafficking process. Binds to ubiquitinated cargo proteins and is required for the sorting of endocytic ubiquitinated cargos into multivesicular bodies (MVBs). Plays a role in the proteasomal degradation of ubiquitinated cell-surface proteins, such as EGFR and BST2. The protein is Ubiquitin-associated protein 1 of Homo sapiens (Human).